A 196-amino-acid polypeptide reads, in one-letter code: MTTVAIQTYFQELRDVVDRVGREKVDQIRQSVQLLTACLRCGGKVLIMGNGGSAADAQHFAAELVGRFLMERKALPSIALTTDTSILTAVGNDYGFDEIFKRQIEALADPRDVVIGLSTSGMSNNVFHALTAANQVGCKTIGLLGREGGSIASIVDVNLTVPEHHTPYIQTAHGAVLHLFCDLLEKELFTPSGQTE.

Residues leucine 35–glutamine 194 enclose the SIS domain. Substrate is bound at residue asparagine 50–glycine 52. The Zn(2+) site is built by histidine 59 and glutamate 63. Residues glutamate 63, asparagine 92–aspartate 93, serine 118–serine 120, serine 123, and glutamine 170 contribute to the substrate site. Zn(2+) is bound by residues glutamine 170 and histidine 178.

This sequence belongs to the SIS family. GmhA subfamily. Homotetramer. Zn(2+) serves as cofactor.

The protein resides in the cytoplasm. It catalyses the reaction 2 D-sedoheptulose 7-phosphate = D-glycero-alpha-D-manno-heptose 7-phosphate + D-glycero-beta-D-manno-heptose 7-phosphate. Its pathway is carbohydrate biosynthesis; D-glycero-D-manno-heptose 7-phosphate biosynthesis; D-glycero-alpha-D-manno-heptose 7-phosphate and D-glycero-beta-D-manno-heptose 7-phosphate from sedoheptulose 7-phosphate: step 1/1. Functionally, catalyzes the isomerization of sedoheptulose 7-phosphate in D-glycero-D-manno-heptose 7-phosphate. This Syntrophotalea carbinolica (strain DSM 2380 / NBRC 103641 / GraBd1) (Pelobacter carbinolicus) protein is Phosphoheptose isomerase.